The primary structure comprises 338 residues: DNA fragmentation factor subunit beta (338 aa).

Residues 4–80 (KPKSVKLRAL…LLTLGQAWQG (77 aa)) enclose the CIDE-N domain.

Heterodimer of DFFA and DFFB. Interacts with H1-1.

Its subcellular location is the cytoplasm. It is found in the nucleus. Inhibited by DFFA (DFF45). In terms of biological role, nuclease that induces DNA fragmentation and chromatin condensation during apoptosis. Degrades naked DNA and induces apoptotic morphology. This Homo sapiens (Human) protein is DNA fragmentation factor subunit beta (DFFB).